Here is a 57-residue protein sequence, read N- to C-terminus: MTILKWALIFLLVSIVAGVLGFTGISAASADIARFLFYVFVVIFLVLLILGLTIFRA.

2 helical membrane passes run Trp6–Ser26 and Phe35–Phe55.

The protein belongs to the UPF0391 family.

The protein localises to the cell membrane. The polypeptide is UPF0391 membrane protein bsl5717 (Bradyrhizobium diazoefficiens (strain JCM 10833 / BCRC 13528 / IAM 13628 / NBRC 14792 / USDA 110)).